The primary structure comprises 170 residues: Transcription factor E (170 aa).

The region spanning 1–93 (MKDVYLYIVE…TWYVDDEIIK (93 aa)) is the HTH TFE/IIEalpha-type domain.

Belongs to the TFE family. In terms of assembly, monomer. Interaction with RNA polymerase subunits RpoF and RpoE is necessary for Tfe stimulatory transcription activity. Able to interact with Tbp and RNA polymerase in the absence of DNA promoter. Interacts both with the preinitiation and elongation complexes.

In terms of biological role, transcription factor that plays a role in the activation of archaeal genes transcribed by RNA polymerase. Facilitates transcription initiation by enhancing TATA-box recognition by TATA-box-binding protein (Tbp), and transcription factor B (Tfb) and RNA polymerase recruitment. Not absolutely required for transcription in vitro, but particularly important in cases where Tbp or Tfb function is not optimal. It dynamically alters the nucleic acid-binding properties of RNA polymerases by stabilizing the initiation complex and destabilizing elongation complexes. Seems to translocate with the RNA polymerase following initiation and acts by binding to the non template strand of the transcription bubble in elongation complexes. This is Transcription factor E from Pyrobaculum aerophilum (strain ATCC 51768 / DSM 7523 / JCM 9630 / CIP 104966 / NBRC 100827 / IM2).